Reading from the N-terminus, the 1594-residue chain is Mucin-like protein (1594 aa).

Residues 1 to 1530 (DTTAGPDTTS…YETREDGLEM (1530 aa)) are Extracellular-facing. TSP type-1 domains are found at residues 141 to 196 (DGGF…GSCP), 198 to 253 (DGNF…PPCP), and 255 to 310 (DGNF…GPCP). 9 disulfide bridges follow: Cys153-Cys190, Cys157-Cys195, Cys168-Cys180, Cys210-Cys247, Cys214-Cys252, Cys225-Cys237, Cys267-Cys304, Cys271-Cys309, and Cys282-Cys294. One can recognise an NIDO domain in the interval 400–566 (LTISDDAFEQ…GVWFFRLEMN (167 aa)). An AMOP domain is found at 568–706 (ILSLAGKKCN…RSCFGYTLRR (139 aa)). The VWFD domain maps to 706–901 (RRGLIFGDPH…KWQINASQSL (196 aa)). 2 consecutive EGF-like domains span residues 1063-1108 (LILL…QYCQ) and 1110-1156 (KIDA…SICE). 14 cysteine pairs are disulfide-bonded: Cys1067–Cys1075, Cys1069–Cys1096, Cys1098–Cys1107, Cys1114–Cys1127, Cys1121–Cys1141, Cys1144–Cys1155, Cys1161–Cys1173, Cys1169–Cys1182, Cys1285–Cys1296, Cys1292–Cys1305, Cys1307–Cys1320, Cys1326–Cys1341, Cys1334–Cys1350, and Cys1352–Cys1363. Residues 1157–1191 (DIDECSDANVSKCDHSCINLPGSYVCDCNQGFSLE) enclose the EGF-like 3; calcium-binding domain. Residues 1281 to 1321 (DINECTTHRHKCSQICHNLDGSYTCSCQPGFNLSPDQTTCE) form the EGF-like 4; calcium-binding domain. The EGF-like 5; calcium-binding domain maps to 1322–1364 (DIDECGLINEAHCEGSLEICINTMGSFRCECQDGFHRVNDTCQ). The chain crosses the membrane as a helical span at residues 1531–1551 (IWLLVGVSVAVAVPLMIVIVI). The Cytoplasmic portion of the chain corresponds to 1552-1593 (LYREYRRIAKQRRKTNNFDLRQWSGARERTIYSGFTNSKSAR).

Component of the acid-insoluble and acid-soluble organic matrix of the aragonitic skeleton (at protein level).

It localises to the membrane. This Acropora millepora (Staghorn coral) protein is Mucin-like protein.